The following is a 218-amino-acid chain: Hypoxanthine-guanine phosphoribosyltransferase (218 aa).

Alanine 2 is subject to N-acetylalanine. A GMP-binding site is contributed by lysine 69. Lysine 103 carries the N6-acetyllysine modification. A Glycyl lysine isopeptide (Lys-Gly) (interchain with G-Cter in SUMO1); alternate cross-link involves residue lysine 115. Residue lysine 115 forms a Glycyl lysine isopeptide (Lys-Gly) (interchain with G-Cter in SUMO2); alternate linkage. Residues 134 to 142 (EDIIDTGKT), lysine 166, 186 to 188 (KFV), and aspartate 194 contribute to the GMP site. Catalysis depends on aspartate 138, which acts as the Proton acceptor. Threonine 142 bears the Phosphothreonine mark. Aspartate 194 is a Mg(2+) binding site.

Belongs to the purine/pyrimidine phosphoribosyltransferase family. In terms of assembly, homotetramer. It depends on Mg(2+) as a cofactor.

It localises to the cytoplasm. It catalyses the reaction IMP + diphosphate = hypoxanthine + 5-phospho-alpha-D-ribose 1-diphosphate. The enzyme catalyses GMP + diphosphate = guanine + 5-phospho-alpha-D-ribose 1-diphosphate. It participates in purine metabolism; IMP biosynthesis via salvage pathway; IMP from hypoxanthine: step 1/1. Converts guanine to guanosine monophosphate, and hypoxanthine to inosine monophosphate. Transfers the 5-phosphoribosyl group from 5-phosphoribosylpyrophosphate onto the purine. Plays a central role in the generation of purine nucleotides through the purine salvage pathway. In Sus scrofa (Pig), this protein is Hypoxanthine-guanine phosphoribosyltransferase (HPRT1).